Reading from the N-terminus, the 163-residue chain is Type-1 angiotensin II receptor-associated protein-like (163 aa).

Residues 1–28 (MELPAVNLKAIVFTHWLLTVFACMIDWL) lie on the Extracellular side of the membrane. Residues 29-49 (PKAYGLANITILAMGVWAIAQ) form a helical membrane-spanning segment. Residues 50–55 (RDSIDA) are Cytoplasmic-facing. A helical membrane pass occupies residues 56-76 (IFMFLIGLLLTILTDILLFAL). Residues 77 to 95 (YFTEAEKASESGPLRDLFR) are Extracellular-facing. Residues 96–116 (FSSGMGIFSLLLKPLSCFFMY) form a helical membrane-spanning segment. Residues 117–163 (HMYRERGGEYFVNLGFITLSRDRSSYQSIEHMDPPADQDNKLPSRTY) are Cytoplasmic-facing.

It is found in the membrane. Its function is as follows. Appears to be a negative regulator of angiotensin II type I receptor-mediated signaling. The polypeptide is Type-1 angiotensin II receptor-associated protein-like (agtrap) (Xenopus tropicalis (Western clawed frog)).